The primary structure comprises 494 residues: MFNYSGLNEECGVFGIWNHPEAAQLTYMGLHSLQHRGQEGAGIVVSDQNELKGERGLGLLTEAIKDDQMERLKGYQHAIGHVRYATSGNKGIENIQPLLYHFYDMSVGICHNGNLINAKSLRQNLEKQGAIFHSSSDTEVIMHLIRRSKAPTFEEALKESLRKIKGGFTFAILTKDALYGAVDPNAIRPLVVGKMKDGTYILASETCAIDVLGAEFVQDIHAGEYVVINDKGITVKSYTHHTTTAISAMEYIYFARPDSTIAGKNVHAVRKASGKMLAQESPVKADMVIGVPNSSLSAASGYAEEIGLPYEMGLVKNQYVARTFIQPTQELREQGVRVKLSAVKDIVDGKNIILVDDSIVRGTTIRRIVKMLKDSGANKVHVRIASPEFMFPSFYGIDVSTTAELISASKSPEEIKDYIGADSLAYLSVDGLIESIGLDYDAPYSGLCVESFTGDYPAGLYDYEANYKAHLSHRQKQYISKNKHYFDSEGNLNV.

Residues 1–10 (MFNYSGLNEE) constitute a propeptide that is removed on maturation. The active-site Nucleophile is the C11. Residues 11–231 (CGVFGIWNHP…AGEYVVINDK (221 aa)) form the Glutamine amidotransferase type-2 domain. Mg(2+)-binding residues include S294, D356, and D357.

This sequence in the C-terminal section; belongs to the purine/pyrimidine phosphoribosyltransferase family. The cofactor is Mg(2+).

The enzyme catalyses 5-phospho-beta-D-ribosylamine + L-glutamate + diphosphate = 5-phospho-alpha-D-ribose 1-diphosphate + L-glutamine + H2O. The protein operates within purine metabolism; IMP biosynthesis via de novo pathway; N(1)-(5-phospho-D-ribosyl)glycinamide from 5-phospho-alpha-D-ribose 1-diphosphate: step 1/2. In terms of biological role, catalyzes the formation of phosphoribosylamine from phosphoribosylpyrophosphate (PRPP) and glutamine. The sequence is that of Amidophosphoribosyltransferase from Staphylococcus aureus (strain MRSA252).